A 159-amino-acid chain; its full sequence is Putative UPF0479 protein YDR545C-A (159 aa).

The next 2 helical transmembrane spans lie at 38–58 and 135–155; these read IVFC…KVLQ and VPMI…ISQH.

The protein belongs to the UPF0479 family.

The protein resides in the membrane. This is Putative UPF0479 protein YDR545C-A from Saccharomyces cerevisiae (strain ATCC 204508 / S288c) (Baker's yeast).